A 125-amino-acid polypeptide reads, in one-letter code: S-adenosylmethionine decarboxylase proenzyme (125 aa).

Residue Ser63 is the Schiff-base intermediate with substrate; via pyruvic acid of the active site. The residue at position 63 (Ser63) is a Pyruvic acid (Ser); by autocatalysis. His68 functions as the Proton acceptor; for processing activity in the catalytic mechanism. The active-site Proton donor; for catalytic activity is Cys83.

Belongs to the prokaryotic AdoMetDC family. Type 1 subfamily. As to quaternary structure, heterotetramer of two alpha and two beta chains arranged as a dimer of alpha/beta heterodimers. Requires pyruvate as cofactor. Post-translationally, is synthesized initially as an inactive proenzyme. Formation of the active enzyme involves a self-maturation process in which the active site pyruvoyl group is generated from an internal serine residue via an autocatalytic post-translational modification. Two non-identical subunits are generated from the proenzyme in this reaction, and the pyruvate is formed at the N-terminus of the alpha chain, which is derived from the carboxyl end of the proenzyme. The post-translation cleavage follows an unusual pathway, termed non-hydrolytic serinolysis, in which the side chain hydroxyl group of the serine supplies its oxygen atom to form the C-terminus of the beta chain, while the remainder of the serine residue undergoes an oxidative deamination to produce ammonia and the pyruvoyl group blocking the N-terminus of the alpha chain.

The enzyme catalyses S-adenosyl-L-methionine + H(+) = S-adenosyl 3-(methylsulfanyl)propylamine + CO2. It functions in the pathway amine and polyamine biosynthesis; S-adenosylmethioninamine biosynthesis; S-adenosylmethioninamine from S-adenosyl-L-methionine: step 1/1. Catalyzes the decarboxylation of S-adenosylmethionine to S-adenosylmethioninamine (dcAdoMet), the propylamine donor required for the synthesis of the polyamines spermine and spermidine from the diamine putrescine. The protein is S-adenosylmethionine decarboxylase proenzyme of Moorella thermoacetica (strain ATCC 39073 / JCM 9320).